Here is a 316-residue protein sequence, read N- to C-terminus: Pantothenate kinase (316 aa).

95–102 (GSVAVGKS) contributes to the ATP binding site.

It belongs to the prokaryotic pantothenate kinase family.

It localises to the cytoplasm. It catalyses the reaction (R)-pantothenate + ATP = (R)-4'-phosphopantothenate + ADP + H(+). It participates in cofactor biosynthesis; coenzyme A biosynthesis; CoA from (R)-pantothenate: step 1/5. This chain is Pantothenate kinase, found in Shigella sonnei (strain Ss046).